The sequence spans 102 residues: Small ribosomal subunit protein uS10 (102 aa).

Belongs to the universal ribosomal protein uS10 family. As to quaternary structure, part of the 30S ribosomal subunit.

In terms of biological role, involved in the binding of tRNA to the ribosomes. The protein is Small ribosomal subunit protein uS10 of Thermosipho africanus (strain TCF52B).